A 437-amino-acid chain; its full sequence is Carboxypeptidase A6 (437 aa).

Positions 1-30 (MKCLGKRRGQAAAFLPLCWLFLKILQPGHS) are cleaved as a signal peptide. Positions 31–129 (HLYNNRYAGD…SSLHTQRNRR (99 aa)) are cleaved as a propeptide — activation peptide. Residues Asn89 and Asn153 are each glycosylated (N-linked (GlcNAc...) asparagine). Residues 138 to 432 (VYHSLEEIQN…LAVKNITMHL (295 aa)) form the Peptidase M14 domain. Positions 196 and 199 each coordinate Zn(2+). Residues 196-199 (HARE), Arg254, and 271-272 (NR) each bind substrate. Cys265 and Cys288 form a disulfide bridge. His324 contacts Zn(2+). Substrate is bound by residues 325-326 (AY) and Tyr376. Residue Glu398 is the Proton donor/acceptor of the active site. N-linked (GlcNAc...) asparagine glycosylation is present at Asn427.

Belongs to the peptidase M14 family. Zn(2+) is required as a cofactor. In terms of tissue distribution, expressed in the hippocampus, nucleus raphe, and cortex.

The protein resides in the secreted. It localises to the extracellular space. The protein localises to the extracellular matrix. Functionally, may be involved in the proteolytic inactivation of enkephalins and neurotensin in some brain areas. May convert inactive angiotensin I into the biologically active angiotensin II. Releases a C-terminal amino acid, with preference for large hydrophobic C-terminal amino acids and shows only very weak activity toward small amino acids and histidine. This chain is Carboxypeptidase A6 (CPA6), found in Homo sapiens (Human).